The chain runs to 493 residues: tRNA(Ile)-lysidine synthase (493 aa).

An ATP-binding site is contributed by 26–31 (SGGSDS).

It belongs to the tRNA(Ile)-lysidine synthase family.

The protein localises to the cytoplasm. The enzyme catalyses cytidine(34) in tRNA(Ile2) + L-lysine + ATP = lysidine(34) in tRNA(Ile2) + AMP + diphosphate + H(+). Its function is as follows. Ligates lysine onto the cytidine present at position 34 of the AUA codon-specific tRNA(Ile) that contains the anticodon CAU, in an ATP-dependent manner. Cytidine is converted to lysidine, thus changing the amino acid specificity of the tRNA from methionine to isoleucine. The chain is tRNA(Ile)-lysidine synthase from Bartonella henselae (strain ATCC 49882 / DSM 28221 / CCUG 30454 / Houston 1) (Rochalimaea henselae).